Consider the following 248-residue polypeptide: Probable 2-oxo-3-(5-oxofuran-2-ylidene)propanoate lactonase (248 aa).

Residues C123, D180, and H212 contribute to the active site.

The protein belongs to the dienelactone hydrolase family.

It carries out the reaction 2-oxo-3-(5-oxofuran-2-ylidene)propanoate + H2O = 3-maleylpyruvate + H(+). Functionally, involved in the 5-nitroanthranilic acid (5NAA) degradation. Catalyzes the hydrolysis of the lactone to produce maleylpyruvate biodegradation of 5-nitroanthranilate. This Bradyrhizobium sp protein is Probable 2-oxo-3-(5-oxofuran-2-ylidene)propanoate lactonase (naaC).